We begin with the raw amino-acid sequence, 178 residues long: Caveolin-1 (178 aa).

Ser-2 bears the N-acetylserine mark. A Phosphoserine modification is found at Ser-2. The tract at residues 2 to 94 is required for homooligomerization; the sequence is SGGKYVDSEG…WKASFTTFTV (93 aa). The Cytoplasmic portion of the chain corresponds to 2-104; sequence SGGKYVDSEG…TKYWFYRLLS (103 aa). Residue Lys-5 is modified to N6-acetyllysine; alternate. Lys-5 participates in a covalent cross-link: Glycyl lysine isopeptide (Lys-Gly) (interchain with G-Cter in ubiquitin); alternate. Tyr-6 carries the phosphotyrosine modification. Ser-9 is subject to Phosphoserine. Tyr-14 carries the post-translational modification Phosphotyrosine; by ABL1. The residue at position 25 (Tyr-25) is a Phosphotyrosine. Glycyl lysine isopeptide (Lys-Gly) (interchain with G-Cter in ubiquitin) cross-links involve residues Lys-26, Lys-30, Lys-39, Lys-47, and Lys-57. The segment at 82–94 is interaction with CAVIN3; sequence DGIWKASFTTFTV. The helical intramembrane region spans 105 to 125; it reads ALFGIPMALIWGIYFAILSFL. The Cytoplasmic segment spans residues 126–178; that stretch reads HIWAVVPCIKSFLIEIQCISRVYSIYVHTFCDPLFEAIGKIFSNVRINLQKEI. The tract at residues 131–142 is interacts with SPRY1, SPRY2, SPRY3 and SPRY4; it reads VPCIKSFLIEIQ. Residues Cys-133, Cys-143, and Cys-156 are each lipidated (S-palmitoyl cysteine). Residues 149–160 form an interacts with SPRY1, SPRY2, and SPRY4 region; it reads SIYVHTFCDPLF. Residues 167 to 178 are interacts with SPRY1, SPRY2, SPRY3 and SPRY4; the sequence is FSNVRINLQKEI.

The protein belongs to the caveolin family. As to quaternary structure, homooligomer. Interacts with GLIPR2. Interacts with NOSTRIN. Interacts with SNAP25 and STX1A. Interacts (via the N-terminus) with DPP4; the interaction is direct. Interacts with CTNNB1, CDH1 and JUP. Interacts with PACSIN2; this interaction induces membrane tubulation. Interacts with SLC7A9. Interacts with BMX and BTK. Interacts with TGFBR1. Interacts with CAVIN3 (via leucine-zipper domain) in a cholesterol-sensitive manner. Interacts with CAVIN1. Interacts with EHD2 in a cholesterol-dependent manner. Forms a ternary complex with UBXN6 and VCP; mediates CAV1 targeting to lysosomes for degradation. Interacts with ABCG1; this interaction regulates ABCG1-mediated cholesterol efflux. Interacts with NEU3; this interaction enhances NEU3 sialidase activity within caveola. Interacts (via C-terminus) with SPRY1, SPRY2 (via C-terminus), SPRY3, and SPRY4. Interacts with IGFBP5; this interaction allows trafficking of IGFBP5 from the plasma membrane to the nucleus. Phosphorylated at Tyr-14 by ABL1 in response to oxidative stress. Post-translationally, ubiquitinated. Undergo monoubiquitination and multi- and/or polyubiquitination. Monoubiquitination of N-terminal lysines promotes integration in a ternary complex with UBXN6 and VCP which promotes oligomeric CAV1 targeting to lysosomes for degradation. Ubiquitinated by ZNRF1; leading to degradation and modulation of the TLR4-mediated immune response.

The protein resides in the golgi apparatus membrane. The protein localises to the cell membrane. Its subcellular location is the membrane. It localises to the caveola. It is found in the membrane raft. Its function is as follows. May act as a scaffolding protein within caveolar membranes. Forms a stable heterooligomeric complex with CAV2 that targets to lipid rafts and drives caveolae formation. Mediates the recruitment of CAVIN proteins (CAVIN1/2/3/4) to the caveolae. Interacts directly with G-protein alpha subunits and can functionally regulate their activity. Involved in the costimulatory signal essential for T-cell receptor (TCR)-mediated T-cell activation. Its binding to DPP4 induces T-cell proliferation and NF-kappa-B activation in a T-cell receptor/CD3-dependent manner. Recruits CTNNB1 to caveolar membranes and may regulate CTNNB1-mediated signaling through the Wnt pathway. Negatively regulates TGFB1-mediated activation of SMAD2/3 by mediating the internalization of TGFBR1 from membrane rafts leading to its subsequent degradation. Binds 20(S)-hydroxycholesterol (20(S)-OHC). The protein is Caveolin-1 (CAV1) of Equus caballus (Horse).